A 239-amino-acid chain; its full sequence is Sugar fermentation stimulation protein homolog (239 aa).

Belongs to the SfsA family.

The polypeptide is Sugar fermentation stimulation protein homolog (Desulforamulus reducens (strain ATCC BAA-1160 / DSM 100696 / MI-1) (Desulfotomaculum reducens)).